The following is a 463-amino-acid chain: MRQENDSLGIVLVPEDKLFGAQTGRSQEFFSYGKESMPLEIIHALVKIKKCAAKANGDLGCLDAKRRDMIVAATDEILSGEFDEHFPLKVWQTGSGTQSNMNVNEVIANLAIQRHGGELGSKHPVHPNDHVNKSQSSNDVFPTAMHIAAVQSIKGSLIPALEHLKKVIDAKALEFARDIKIGRTHLMDAVPMTLGQEFSGYSCQLHNCLERIGFSLTHLYELAIGGTAIGTGLNVPEGFVEKVIQYLRRETGEPFVPASNYFAALSNHDALVQAHGSLTVLACALVKIATDLSFLGSGPRCGLGEIFFPENEPGSSIMPGKINPTQSEALQMVCSQVIGNNQSIIFSGTKGNFELNVMKPVIIYDFLQSVNLLAGAMRSFADYFVCGLKVNKGQLQQNVERSLMLVTALAPVLGYDKCSKIALKAFHENLSLKEACVSLGFLSEKEFDEHVIPGLMVGNRGHE.

Substrate is bound by residues 95-97 (SGT), 126-129 (HPND), 136-138 (SSN), and Thr184. His185 serves as the catalytic Proton donor/acceptor. Ser315 is a catalytic residue. Residues Ser316 and 321–323 (KIN) contribute to the substrate site.

It belongs to the class-II fumarase/aspartase family. Fumarase subfamily. As to quaternary structure, homotetramer.

Its subcellular location is the cytoplasm. It carries out the reaction (S)-malate = fumarate + H2O. Its pathway is carbohydrate metabolism; tricarboxylic acid cycle; (S)-malate from fumarate: step 1/1. Functionally, involved in the TCA cycle. Catalyzes the stereospecific interconversion of fumarate to L-malate. This chain is Fumarate hydratase class II, found in Chlamydia trachomatis serovar D (strain ATCC VR-885 / DSM 19411 / UW-3/Cx).